The primary structure comprises 341 residues: Anthranilate phosphoribosyltransferase (341 aa).

5-phospho-alpha-D-ribose 1-diphosphate-binding positions include glycine 79, 82-83 (GD), threonine 87, 89-92 (NIST), 107-115 (KHGNRSISS), and serine 119. Glycine 79 serves as a coordination point for anthranilate. Mg(2+) is bound at residue serine 91. Asparagine 110 contributes to the anthranilate binding site. Arginine 164 contacts anthranilate. Residues aspartate 222 and glutamate 223 each coordinate Mg(2+).

This sequence belongs to the anthranilate phosphoribosyltransferase family. In terms of assembly, homodimer. It depends on Mg(2+) as a cofactor.

The catalysed reaction is N-(5-phospho-beta-D-ribosyl)anthranilate + diphosphate = 5-phospho-alpha-D-ribose 1-diphosphate + anthranilate. The protein operates within amino-acid biosynthesis; L-tryptophan biosynthesis; L-tryptophan from chorismate: step 2/5. Catalyzes the transfer of the phosphoribosyl group of 5-phosphorylribose-1-pyrophosphate (PRPP) to anthranilate to yield N-(5'-phosphoribosyl)-anthranilate (PRA). The protein is Anthranilate phosphoribosyltransferase of Blochmanniella pennsylvanica (strain BPEN).